Reading from the N-terminus, the 85-residue chain is U4-theraphotoxin-Hhn1o (85 aa).

The N-terminal stretch at 1–22 is a signal peptide; the sequence is MKVTLIAILTCAAVLVLHTTAA. Residues 23–48 constitute a propeptide that is removed on maturation; the sequence is EELEAESQLMEVGMPDTELAAVDEER. 3 disulfide bridges follow: C52–C66, C56–C77, and C71–C82.

It belongs to the neurotoxin 12 (Hwtx-2) family. 02 (Hwtx-2) subfamily. Expressed by the venom gland.

The protein localises to the secreted. Postsynaptic neurotoxin. The chain is U4-theraphotoxin-Hhn1o from Cyriopagopus hainanus (Chinese bird spider).